The chain runs to 63 residues: Large ribosomal subunit protein bL35 (63 aa).

Residues 26–50 are disordered; that stretch reads GSGMRHNLEHKSARKRRALKRDDVL.

This sequence belongs to the bacterial ribosomal protein bL35 family.

The polypeptide is Large ribosomal subunit protein bL35 (Bifidobacterium animalis subsp. lactis (strain AD011)).